The primary structure comprises 505 residues: Lysine--tRNA ligase (505 aa).

Glutamate 415 and glutamate 422 together coordinate Mg(2+).

This sequence belongs to the class-II aminoacyl-tRNA synthetase family. Homodimer. Mg(2+) serves as cofactor.

It is found in the cytoplasm. It carries out the reaction tRNA(Lys) + L-lysine + ATP = L-lysyl-tRNA(Lys) + AMP + diphosphate. This chain is Lysine--tRNA ligase, found in Shigella flexneri.